Reading from the N-terminus, the 333-residue chain is Casein kinase II subunit beta-1 (333 aa).

Residues 58 to 78 are compositionally biased toward acidic residues; it reads VEPEDDDDEEEEDEEDEEDMS. Disordered stretches follow at residues 58-92 and 282-333; these read VEPE…ERRH and ARRY…ESEL. Residues 305 to 316 show a composition bias toward basic residues; sequence ASRRRGPPRRQK.

The protein belongs to the casein kinase 2 subunit beta family. Tetramer composed of two alpha chains, one beta chain and one beta' chain. In terms of processing, phosphorylated by alpha subunit.

In terms of biological role, regulatory subunit of casein kinase II/CK2. As part of the kinase complex regulates the basal catalytic activity of the alpha subunit a constitutively active serine/threonine-protein kinase that phosphorylates a large number of substrates containing acidic residues C-terminal to the phosphorylated serine or threonine. The protein is Casein kinase II subunit beta-1 (ckb-1) of Neurospora crassa (strain ATCC 24698 / 74-OR23-1A / CBS 708.71 / DSM 1257 / FGSC 987).